The sequence spans 269 residues: Chymotrypsin-like elastase family member 2A (269 aa).

The N-terminal stretch at 1–16 is a signal peptide; that stretch reads MIRALLLSTLVAGALS. Positions 17–28 are cleaved as a propeptide — activation peptide; sequence CGVPTYPPQLSR. Positions 29 to 267 constitute a Peptidase S1 domain; that stretch reads VVGGEDARPN…YNDWISSVIE (239 aa). A disulfide bridge connects residues Cys-58 and Cys-74. Catalysis depends on charge relay system residues His-73 and Asp-121. 3 disulfide bridges follow: Cys-155/Cys-222, Cys-186/Cys-202, and Cys-212/Cys-243. Ser-216 functions as the Charge relay system in the catalytic mechanism.

It belongs to the peptidase S1 family. Elastase subfamily. In terms of assembly, interacts with CPA1. Interacts with SERPINA1. As to expression, pancreas.

The protein localises to the secreted. The enzyme catalyses Preferential cleavage: Leu-|-Xaa, Met-|-Xaa and Phe-|-Xaa. Hydrolyzes elastin.. Its function is as follows. Elastase that enhances insulin signaling and might have a physiologic role in cellular glucose metabolism. Circulates in plasma and reduces platelet hyperactivation, triggers both insulin secretion and degradation, and increases insulin sensitivity. The chain is Chymotrypsin-like elastase family member 2A (CELA2A) from Bos taurus (Bovine).